Here is a 251-residue protein sequence, read N- to C-terminus: 1-(5-phosphoribosyl)-5-[(5-phosphoribosylamino)methylideneamino] imidazole-4-carboxamide isomerase (251 aa).

The active-site Proton acceptor is the Asp-8. Residue Asp-131 is the Proton donor of the active site.

This sequence belongs to the HisA/HisF family.

Its subcellular location is the cytoplasm. The enzyme catalyses 1-(5-phospho-beta-D-ribosyl)-5-[(5-phospho-beta-D-ribosylamino)methylideneamino]imidazole-4-carboxamide = 5-[(5-phospho-1-deoxy-D-ribulos-1-ylimino)methylamino]-1-(5-phospho-beta-D-ribosyl)imidazole-4-carboxamide. It participates in amino-acid biosynthesis; L-histidine biosynthesis; L-histidine from 5-phospho-alpha-D-ribose 1-diphosphate: step 4/9. This Azoarcus sp. (strain BH72) protein is 1-(5-phosphoribosyl)-5-[(5-phosphoribosylamino)methylideneamino] imidazole-4-carboxamide isomerase.